Consider the following 257-residue polypeptide: Kallikrein-1 (257 aa).

The first 18 residues, 1-18 (MWFLVLCLALSLGGTGRA), serve as a signal peptide directing secretion. A propeptide spans 19–24 (PPIQSR) (activation peptide). The 230-residue stretch at 25-254 (IVGGWECSQP…YVKWIEDTIA (230 aa)) folds into the Peptidase S1 domain. 5 disulfide bridges follow: Cys-31-Cys-169, Cys-47-Cys-63, Cys-148-Cys-215, Cys-180-Cys-194, and Cys-205-Cys-230. The Charge relay system role is filled by His-62. A glycan (O-linked (GalNAc...) serine) is linked at Ser-90. The N-linked (GlcNAc...) asparagine glycan is linked to Asn-99. O-linked (GalNAc...) serine glycosylation occurs at Ser-101. Asn-105 carries an N-linked (GlcNAc...) asparagine glycan. The active-site Charge relay system is the Asp-116. Residue Asn-160 is glycosylated (N-linked (GlcNAc...) asparagine). O-linked (GalNAc...) serine glycosylation is present at Ser-162. Ser-209 functions as the Charge relay system in the catalytic mechanism.

This sequence belongs to the peptidase S1 family. Kallikrein subfamily.

The catalysed reaction is Preferential cleavage of Arg-|-Xaa bonds in small molecule substrates. Highly selective action to release kallidin (lysyl-bradykinin) from kininogen involves hydrolysis of Met-|-Xaa or Leu-|-Xaa.. Functionally, glandular kallikreins cleave Met-Lys and Arg-Ser bonds in kininogen to release Lys-bradykinin. This Macaca fascicularis (Crab-eating macaque) protein is Kallikrein-1 (KLK1).